A 1287-amino-acid chain; its full sequence is SCL-interrupting locus protein (1287 aa).

N-acetylmethionine is present on methionine 1. Residues 1 to 1018 (MEPIYPFARP…IDSPTKVKKN (1018 aa)) form an interaction with RBM14 region. The interaction with CPAP stretch occupies residues 231–781 (YKYGYLTMDE…VSVEAQSSPG (551 aa)). Disordered regions lie at residues 378 to 417 (RSSQ…SQKI) and 508 to 533 (PPAY…PSHD). A Phosphoserine modification is found at serine 395. The segment covering 517 to 529 (HTRNSIKPSSHNG) has biased composition (polar residues). Residues 584-779 (PMELQIPTPP…ELVSVEAQSS (196 aa)) form a PIN1-binding region. 3 positions are modified to phosphoserine: serine 753, serine 779, and serine 1135.

Homodimer. Interacts with PIN1 via its WW domain. This interaction is dependent on STIL mitotic phosphorylation. Interacts with CPAP. Interacts with RBM14 and this interaction interferes with the interaction of STIL with CPAP. Forms a complex with CPAP and SASS6. Interacts (via N-terminus) with CEP85; this interaction is essential for efficient centriolar targeting of STIL and subsequent PLK4 activation. Ubiquitinated. In terms of processing, phosphorylated following the activation of the mitotic checkpoint. Expressed in all hematopoietic tissues and cell lines. Highly expressed in a variety of tumors characterized by increased mitotic activity with highest expression in lung cancer.

Its subcellular location is the cytoplasm. The protein localises to the cytosol. It localises to the cytoskeleton. The protein resides in the microtubule organizing center. It is found in the centrosome. Its subcellular location is the centriole. The protein localises to the cell cortex. Functionally, immediate-early gene. Plays an important role in embryonic development as well as in cellular growth and proliferation; its long-term silencing affects cell survival and cell cycle distribution as well as decreases CDK1 activity correlated with reduced phosphorylation of CDK1. Plays a role as a positive regulator of the sonic hedgehog pathway, acting downstream of PTCH1. Plays an important role in the regulation of centriole duplication. Required for the onset of procentriole formation and proper mitotic progression. During procentriole formation, is essential for the correct loading of SASS6 and CPAP to the base of the procentriole to initiate procentriole assembly. In complex with STIL acts as a modulator of PLK4-driven cytoskeletal rearrangements and directional cell motility. This chain is SCL-interrupting locus protein (STIL), found in Homo sapiens (Human).